The chain runs to 725 residues: Another transcription unit protein (725 aa).

Positions 1 to 10 (MGSQNSDDDS) are enriched in acidic residues. Disordered stretches follow at residues 1-379 (MGSQ…PETR), 566-603 (RQAM…EGSD), and 617-725 (YKKG…SDND). Residues 11 to 70 (GSSGSSRSGSRSVTPQGGSAPGSQRSRRSGSGSDRSRSGSRSSRSRSGSGSPRSARSGSA) show a composition bias toward low complexity. Basic residues predominate over residues 82-101 (RSKRSRSAHSRRSGSARSRK). Over residues 104 to 116 (TPESPQSHRSGSL) the composition is skewed to polar residues. Over residues 117-140 (QSRKSGSPQSRRSGSPQSRKSGST) the composition is skewed to low complexity. The segment covering 141 to 160 (HSRRSGSAHSRRSGSARSRK) has biased composition (basic residues). A phosphoserine mark is found at Ser175, Ser186, Ser188, and Ser190. The span at 206 to 223 (SRSRSRSRSGSRTSRSRS) shows a compositional bias: basic residues. Over residues 224 to 242 (KTGTPSPNRSRSGSASGSG) the composition is skewed to low complexity. Phosphoserine occurs at positions 265, 267, and 269. Thr286 is subject to Phosphothreonine. Phosphoserine occurs at positions 288, 290, and 312. A compositionally biased stretch (acidic residues) spans 306–318 (GDADDISDDEDEA). Residues 325–353 (SPVRSKSRSQSKSHSHSRSMSHSRSRSRS) are compositionally biased toward basic residues. Residues 354 to 369 (RSRDKVESQVESAPKE) are compositionally biased toward basic and acidic residues. Phosphoserine is present on Ser355. Positions 571 to 582 (NQHKSLPKKKKP) are enriched in basic residues. Thr593 carries the phosphothreonine modification. Phosphoserine occurs at positions 595, 602, and 631. At Thr632 the chain carries Phosphothreonine. 3 positions are modified to phosphoserine: Ser635, Ser636, and Ser642. Positions 644 to 665 (FEARRSKKVDKAKASKALRDSD) are enriched in basic and acidic residues. Residues 710 to 725 (SGSGSGSGSGSGSDND) are compositionally biased toward gly residues.

In Drosophila melanogaster (Fruit fly), this protein is Another transcription unit protein (Atu).